The chain runs to 539 residues: Glucans biosynthesis protein D (539 aa).

The segment at residues 1-29 is a signal peptide (tat-type signal); that stretch reads MNRRNLLKASMALAAYGSVSASGLYAARA.

The protein belongs to the OpgD/OpgG family. Post-translationally, predicted to be exported by the Tat system. The position of the signal peptide cleavage has not been experimentally proven.

It is found in the periplasm. Its pathway is glycan metabolism; osmoregulated periplasmic glucan (OPG) biosynthesis. Its function is as follows. Probably involved in the control of the structural glucose backbone of osmoregulated periplasmic glucans (OPGs). This chain is Glucans biosynthesis protein D, found in Pseudomonas savastanoi pv. phaseolicola (strain 1448A / Race 6) (Pseudomonas syringae pv. phaseolicola (strain 1448A / Race 6)).